The following is a 452-amino-acid chain: Pup--protein ligase (452 aa).

Mg(2+) is bound at residue glutamate 9. Residue arginine 53 coordinates ATP. Residue tyrosine 55 participates in Mg(2+) binding. Aspartate 57 functions as the Proton acceptor in the catalytic mechanism. Glutamate 63 is a Mg(2+) binding site. Positions 66 and 419 each coordinate ATP.

This sequence belongs to the Pup ligase/Pup deamidase family. Pup-conjugating enzyme subfamily.

The catalysed reaction is ATP + [prokaryotic ubiquitin-like protein]-L-glutamate + [protein]-L-lysine = ADP + phosphate + N(6)-([prokaryotic ubiquitin-like protein]-gamma-L-glutamyl)-[protein]-L-lysine.. It participates in protein degradation; proteasomal Pup-dependent pathway. The protein operates within protein modification; protein pupylation. In terms of biological role, catalyzes the covalent attachment of the prokaryotic ubiquitin-like protein modifier Pup to the proteasomal substrate proteins, thereby targeting them for proteasomal degradation. This tagging system is termed pupylation. The ligation reaction involves the side-chain carboxylate of the C-terminal glutamate of Pup and the side-chain amino group of a substrate lysine. This is Pup--protein ligase from Thermobifida fusca (strain YX).